The following is a 238-amino-acid chain: Cysteine-rich venom protein natrin-2 (238 aa).

The first 19 residues, 1-19 (MIAFIVLLSLAAVLQQSSG), serve as a signal peptide directing secretion. The SCP domain maps to 38 to 164 (VDKHNALRRS…SSKYLYVCQY (127 aa)). 8 cysteine pairs are disulfide-bonded: C75-C153, C92-C165, C148-C162, C184-C191, C187-C196, C200-C233, C209-C227, and C218-C231. The ShKT domain occupies 200–233 (CKHHNVFSNCQSLAKQNACQTEWMKSKCAASCFC).

In terms of tissue distribution, expressed by the venom gland.

Its subcellular location is the secreted. Its function is as follows. Inhibits carbachol-induced muscle contraction and weakly blocks muscle contraction evoked by potassium. This chain is Cysteine-rich venom protein natrin-2, found in Naja atra (Chinese cobra).